Here is a 285-residue protein sequence, read N- to C-terminus: Golgi to ER traffic protein 2 (285 aa).

Residues 1-10 show a composition bias toward basic and acidic residues; sequence MSELTEAEKR. The interval 1–71 is disordered; that stretch reads MSELTEAEKR…HSATPDIKED (71 aa). Position 2 is an N-acetylserine (S2). Residues 2–148 are Cytoplasmic-facing; that stretch reads SELTEAEKRR…LDYHDYLLNR (147 aa). Positions 11-20 are enriched in basic residues; sequence RLLRERRQKK. Polar residues predominate over residues 24 to 42; that stretch reads GGASSRLNKITGQASSHLN. Position 45 is a phosphoserine (S45). Residues 49-60 are compositionally biased toward low complexity; that stretch reads APSAAKATPPAS. Residues 149–169 traverse the membrane as a helical segment; it reads LKAWTILVKWVFFLLPYLYLI. Residues 170–196 are Lumenal-facing; it reads TRPNSSVWPAYAFTQSAWFAPLRNPSN. Residues N173 and N196 are each glycosylated (N-linked (GlcNAc...) asparagine). A helical membrane pass occupies residues 197–216; sequence FTRIFATFEFLSISIYYQLL. Over 217–263 the chain is Cytoplasmic; the sequence is KNVEHKSKIKNLQDTNKLVKLVSLVPEGVIPVANLKGKLITLLQYWD. Residues 264–284 form a helical membrane-spanning segment; that stretch reads LLSMLITDISFVLIVLGLLTY. L285 is a topological domain (lumenal).

The protein belongs to the GET2 family. As to quaternary structure, component of the Golgi to ER traffic (GET) complex, which is composed of GET1, GET2 and GET3. Within the complex, GET1 and GET2 form a heterotetramer which is stabilized by phosphatidylinositol binding and which binds to the GET3 homodimer.

It is found in the endoplasmic reticulum membrane. It localises to the golgi apparatus membrane. In terms of biological role, required for the post-translational delivery of tail-anchored (TA) proteins to the endoplasmic reticulum. Together with GET1, acts as a membrane receptor for soluble GET3, which recognizes and selectively binds the transmembrane domain of TA proteins in the cytosol. The GET complex cooperates with the HDEL receptor ERD2 to mediate the ATP-dependent retrieval of resident ER proteins that contain a C-terminal H-D-E-L retention signal from the Golgi to the ER. Involved in DNA replication and DNA damage response and also in cell wall function. This chain is Golgi to ER traffic protein 2, found in Saccharomyces cerevisiae (strain YJM789) (Baker's yeast).